The primary structure comprises 1203 residues: MAGHDVQYGKHRTRRSFSRIKEVLDLPNLIEIQTDSFKAFLDHGLKEVFEDVLPISNFTDTMELEFVGYEIKEPKYTLEEARIHDASYSAPIFVTFRLINKETGEIKTQEVFFGDFPIMTEMGTFIINGGERIIVSQLVRSPGVYFNDKVDKNGKVGYGSTVIPNRGAWLELESDSKDITYTRIDRTRKIPFTTLVRALGFSGDDEIFDIFGDSELVRNTVEKDIHKNPMDSRTDEALKEIYERLRPGEPKTAESSRSLLVARFFDPRRYDLAAVGRYKINKKLNVKTRLLNQTIAEPLVDPETGEILVEAGTIMTRSVIESIESHLDGDLNKIVYIPNDAAVVTEPVVLQKFKVVAPTDPDRVVTIIGNANPDDKVRTVTPADILAEMSYFLNLAEGLGRVDDIDHLGNRRIRAVGELLANQVRLGLSRMERNVRERMSVQDNEVLTPQQIINIRPVTAAVKEFFGSSQLSQFMDQHNPLSELSHKRRLSALGPGGLTRDRAGYEVRDVHYTHYGRMCPIETPEGPNIGLINNLSSYGHLNKYGFVQTPYRKVDRETGVVTNEIVWLTADEEDEYTVAQANSRLNEDGTFAEKIVMGRHQGVNQEYPANIVDYMDVSPKQVVAVATACIPFLENDDSNRALMGANMQRQAVPLINPQAPYVGTGMEYQAAHDSGAAVIAQYNGKVTYADADKVEVRREDGSLDVYHIQKFRRSNSGTAYNQRTLVKVGDVVEKGDFIADGPSMENGEMALGQNPIVAYMTWEGYNFEDAVIMSERLVKDDVYTSVHLEEYESETRDTKLGPEEITREIPNVGEDALKDLDEMGIIRIGAEVKEGDILVGKVTPKGEKDLSAEERLLHAIFGDKSREVRDTSLRVPHGADGVVRDVKIFTRVNGDELQSGVNMLVRVYIAQKRKIKVGDKMAGRHGNKGVVSRIVPVEDMPYLPDGTPVDIMLNPLGVPSRMNIGQVMELHLGMAARTLGIHIATPVFDGASSEDLWSTVKEAGMDSDAKTILYDGRTGEPFDNRVSVGVMYMIKLHHMVDDKLHARSVGPYSTVTQQPLGGKAQFGGQRFGEMEVWALEAYGASNVLQEILTYKSDDINGRLKAYEAITKGKPIPKPGVPESFRVLVKELQSLGLDMRVLDEDDQEVELRDLDEGMDEDVIHVDDLEKAREKAAQEAKAAFEAEEAEKATKAEATEEAAEQE.

The segment covering 1174–1195 (AAQEAKAAFEAEEAEKATKAEA) has biased composition (basic and acidic residues). Residues 1174 to 1203 (AAQEAKAAFEAEEAEKATKAEATEEAAEQE) are disordered.

Belongs to the RNA polymerase beta chain family. The RNAP catalytic core consists of 2 alpha, 1 beta, 1 beta' and 1 omega subunit. When a sigma factor is associated with the core the holoenzyme is formed, which can initiate transcription.

The catalysed reaction is RNA(n) + a ribonucleoside 5'-triphosphate = RNA(n+1) + diphosphate. DNA-dependent RNA polymerase catalyzes the transcription of DNA into RNA using the four ribonucleoside triphosphates as substrates. The chain is DNA-directed RNA polymerase subunit beta from Streptococcus pneumoniae serotype 19F (strain G54).